Consider the following 1196-residue polypeptide: Major DNA-binding protein (1196 aa).

Residues 499–512 (CNLCTFDTRHACVH) fold into a zinc finger. Short sequence motifs (required for filament formation) lie at residues 843–844 (FW) and 1142–1144 (FNF). The interval 1158–1196 (GGPGAPGPAFAGRKRAFHGDDPFGEGPPDKKGDLTLDML) is disordered. Positions 1170 to 1196 (RKRAFHGDDPFGEGPPDKKGDLTLDML) are required for nuclear localization. Positions 1174-1196 (FHGDDPFGEGPPDKKGDLTLDML) are enriched in basic and acidic residues.

It belongs to the herpesviridae major DNA-binding protein family. As to quaternary structure, homooligomers. Forms double-helical filaments necessary for the formation of replication compartments within the host nucleus. Interacts with the origin-binding protein. Interacts with the helicase primase complex; this interaction stimulates primer synthesis activity of the helicase-primase complex. Interacts with the DNA polymerase. Interacts with the alkaline exonuclease; this interaction increases its nuclease processivity.

It localises to the host nucleus. Its function is as follows. Plays several crucial roles in viral infection. Participates in the opening of the viral DNA origin to initiate replication by interacting with the origin-binding protein. May disrupt loops, hairpins and other secondary structures present on ssDNA to reduce and eliminate pausing of viral DNA polymerase at specific sites during elongation. Promotes viral DNA recombination by performing strand-transfer, characterized by the ability to transfer a DNA strand from a linear duplex to a complementary single-stranded DNA circle. Can also catalyze the renaturation of complementary single strands. Additionally, reorganizes the host cell nucleus, leading to the formation of prereplicative sites and replication compartments. This process is driven by the protein which can form double-helical filaments in the absence of DNA. The sequence is that of Major DNA-binding protein from Human herpesvirus 1 (strain KOS) (HHV-1).